The sequence spans 388 residues: Probable mannan endo-1,4-beta-mannosidase A-1 (388 aa).

Residues 1–20 (MKLSPLMALAGLASAQLALA) form the signal peptide. Substrate-binding residues include tryptophan 93 and asparagine 206. Glutamate 207 functions as the Proton donor in the catalytic mechanism. A glycan (N-linked (GlcNAc...) asparagine) is linked at asparagine 264. Residue tyrosine 282 coordinates substrate. The Nucleophile role is filled by glutamate 315. Asparagine 335 is a glycosylation site (N-linked (GlcNAc...) asparagine). Residue tryptophan 345 coordinates substrate.

It belongs to the glycosyl hydrolase 5 (cellulase A) family.

The protein resides in the secreted. It catalyses the reaction Random hydrolysis of (1-&gt;4)-beta-D-mannosidic linkages in mannans, galactomannans and glucomannans.. Its function is as follows. Endo-1,4-mannanase, a crucial enzyme for depolymerization of seed galactomannans and wood galactoglucomannans. This chain is Probable mannan endo-1,4-beta-mannosidase A-1 (manA-1), found in Aspergillus terreus (strain NIH 2624 / FGSC A1156).